A 586-amino-acid chain; its full sequence is Phosphomethylpyrimidine synthase (586 aa).

The disordered stretch occupies residues Met1–Gly58. Over residues Val22 to Glu39 the composition is skewed to basic and acidic residues. Substrate contacts are provided by residues Asn193, Met222, Tyr251, His287, Ser307–Gly309, Asp348–Arg351, and Glu387. A Zn(2+)-binding site is contributed by His391. Tyr414 lines the substrate pocket. Residue His455 participates in Zn(2+) binding. 3 residues coordinate [4Fe-4S] cluster: Cys535, Cys538, and Cys543.

Belongs to the ThiC family. The cofactor is [4Fe-4S] cluster.

It carries out the reaction 5-amino-1-(5-phospho-beta-D-ribosyl)imidazole + S-adenosyl-L-methionine = 4-amino-2-methyl-5-(phosphooxymethyl)pyrimidine + CO + 5'-deoxyadenosine + formate + L-methionine + 3 H(+). Its pathway is cofactor biosynthesis; thiamine diphosphate biosynthesis. Catalyzes the synthesis of the hydroxymethylpyrimidine phosphate (HMP-P) moiety of thiamine from aminoimidazole ribotide (AIR) in a radical S-adenosyl-L-methionine (SAM)-dependent reaction. The polypeptide is Phosphomethylpyrimidine synthase (Bacillus anthracis (strain A0248)).